Reading from the N-terminus, the 692-residue chain is Elongation factor G (692 aa).

Positions 8-282 constitute a tr-type G domain; it reads ENTRNIGIMA…AVIDYLPSPL (275 aa). GTP-binding positions include 17 to 24, 81 to 85, and 135 to 138; these read AHIDAGKT, DTPGH, and NKMD.

It belongs to the TRAFAC class translation factor GTPase superfamily. Classic translation factor GTPase family. EF-G/EF-2 subfamily.

The protein localises to the cytoplasm. Catalyzes the GTP-dependent ribosomal translocation step during translation elongation. During this step, the ribosome changes from the pre-translocational (PRE) to the post-translocational (POST) state as the newly formed A-site-bound peptidyl-tRNA and P-site-bound deacylated tRNA move to the P and E sites, respectively. Catalyzes the coordinated movement of the two tRNA molecules, the mRNA and conformational changes in the ribosome. In Bacillus anthracis (strain CDC 684 / NRRL 3495), this protein is Elongation factor G.